A 459-amino-acid polypeptide reads, in one-letter code: Argininosuccinate lyase (459 aa).

The tract at residues 440 to 459 (DEKKLEELRQNENRDNVYNP) is disordered.

This sequence belongs to the lyase 1 family. Argininosuccinate lyase subfamily.

The protein localises to the cytoplasm. It catalyses the reaction 2-(N(omega)-L-arginino)succinate = fumarate + L-arginine. The protein operates within amino-acid biosynthesis; L-arginine biosynthesis; L-arginine from L-ornithine and carbamoyl phosphate: step 3/3. This Pyrococcus furiosus (strain ATCC 43587 / DSM 3638 / JCM 8422 / Vc1) protein is Argininosuccinate lyase.